The following is a 908-amino-acid chain: AdoMet-dependent rRNA methyltransferase SPB1 (908 aa).

Positions 57, 59, 77, 93, and 118 each coordinate S-adenosyl-L-methionine. The active-site Proton acceptor is the K158. The stretch at 378–422 (MDEEEQITEELQKLQQAKLAKTKRERKRANEKKARELLKLQLNMT) forms a coiled coil. Disordered stretches follow at residues 440–513 (IFDL…YDSY), 535–715 (NFDA…DEVK), and 806–841 (AKGR…EKAR). The segment covering 464 to 493 (DDGEGMDLASESEEEEDEDEEDDEVLDSDE) has biased composition (acidic residues). The segment covering 535–545 (NFDAWHGIQEK) has biased composition (basic and acidic residues). Composition is skewed to acidic residues over residues 546-564 (SDEE…EEGG) and 579-591 (DSSD…EPET). Positions 592–610 (EVPKKIKKVSFEKPARSEK) are enriched in basic and acidic residues. Composition is skewed to acidic residues over residues 650–678 (DGDD…EDAS) and 685–712 (EGDD…EDQD). A compositionally biased stretch (basic and acidic residues) spans 816-827 (ARMEKAKKKADG).

Belongs to the class I-like SAM-binding methyltransferase superfamily. RNA methyltransferase RlmE family. SPB1 subfamily. As to quaternary structure, component of the nucleolar and nucleoplasmic pre-60S ribosomal particle.

The protein resides in the nucleus. It localises to the nucleolus. The catalysed reaction is a ribonucleotide in rRNA + S-adenosyl-L-methionine = a 2'-O-methylribonucleotide in rRNA + S-adenosyl-L-homocysteine + H(+). Functionally, required for proper assembly of pre-ribosomal particles during the biogenesis of the 60S ribosomal subunit. The sequence is that of AdoMet-dependent rRNA methyltransferase SPB1 from Cryptococcus neoformans var. neoformans serotype D (strain B-3501A) (Filobasidiella neoformans).